A 346-amino-acid chain; its full sequence is RNA polymerase II holoenzyme cyclin-like subunit (346 aa).

Positions 59–158 (NLLIKLGRRL…EMDSYLFLHH (100 aa)) constitute a Cyclin N-terminal domain.

Belongs to the cyclin family. Cyclin C subfamily. As to quaternary structure, component of the SRB8-11 complex, a regulatory module of the Mediator complex.

The protein resides in the nucleus. Its function is as follows. Component of the SRB8-11 complex. The SRB8-11 complex is a regulatory module of the Mediator complex which is itself involved in regulation of basal and activated RNA polymerase II-dependent transcription. The SRB8-11 complex may be involved in the transcriptional repression of a subset of genes regulated by Mediator. It may inhibit the association of the Mediator complex with RNA polymerase II to form the holoenzyme complex. The SRB8-11 complex phosphorylates the C-terminal domain (CTD) of the largest subunit of RNA polymerase II. The polypeptide is RNA polymerase II holoenzyme cyclin-like subunit (SSN8) (Scheffersomyces stipitis (strain ATCC 58785 / CBS 6054 / NBRC 10063 / NRRL Y-11545) (Yeast)).